The following is a 240-amino-acid chain: Acetoacetyl-CoA reductase (240 aa).

NADP(+)-binding positions include 18-20 (RGI) and 82-86 (NAGIT). Substrate contacts are provided by residues S134 and 141 to 144 (NVGQ). Y147 (proton acceptor) is an active-site residue. Residue 177 to 180 (PGFI) participates in NADP(+) binding. Residue 178–179 (GF) coordinates substrate.

This sequence belongs to the short-chain dehydrogenases/reductases (SDR) family.

The catalysed reaction is a (3R)-3-hydroxyacyl-CoA + NADP(+) = a 3-oxoacyl-CoA + NADPH + H(+). The protein operates within biopolymer metabolism; poly-(R)-3-hydroxybutanoate biosynthesis. Its function is as follows. Catalyzes the reduction of acetoacetyl-CoA to (R)-3-hydroxybutyryl-CoA. When expressed in E.coli with Synechocystis PhaA, PhaC and PhaE confers the ability to synthesize up to 12% (w/w) poly(3-hydroxybutyrate) (PHB) depending on the carbon source. This is Acetoacetyl-CoA reductase from Synechocystis sp. (strain ATCC 27184 / PCC 6803 / Kazusa).